The sequence spans 207 residues: Phosphoenolpyruvate guanylyltransferase (207 aa).

Phosphoenolpyruvate contacts are provided by threonine 137, glycine 153, and serine 156.

It belongs to the CofC family.

The catalysed reaction is phosphoenolpyruvate + GTP + H(+) = enolpyruvoyl-2-diphospho-5'-guanosine + diphosphate. It functions in the pathway cofactor biosynthesis; coenzyme F420 biosynthesis. Functionally, guanylyltransferase that catalyzes the activation of phosphoenolpyruvate (PEP) as enolpyruvoyl-2-diphospho-5'-guanosine, via the condensation of PEP with GTP. It is involved in the biosynthesis of coenzyme F420, a hydride carrier cofactor. This chain is Phosphoenolpyruvate guanylyltransferase, found in Sphaerobacter thermophilus (strain ATCC 49802 / DSM 20745 / KCCM 41009 / NCIMB 13125 / S 6022).